Here is a 162-residue protein sequence, read N- to C-terminus: Photosystem II extrinsic protein V (162 aa).

Residues 1–25 form the signal peptide; it reads MLKRCLWLVVTVLFAWQVFNGTAIA. Positions 62, 65, 66, and 117 each coordinate heme c.

The protein belongs to the cytochrome c family. PsbV subfamily. PSII is composed of 1 copy each of membrane proteins PsbA, PsbB, PsbC, PsbD, PsbE, PsbF, PsbH, PsbI, PsbJ, PsbK, PsbL, PsbM, PsbT, PsbX, PsbY, PsbZ, Psb30/Ycf12, peripheral proteins PsbO, CyanoQ (PsbQ), PsbU, PsbV and a large number of cofactors. It forms dimeric complexes. Requires heme c as cofactor.

It localises to the cellular thylakoid membrane. In terms of biological role, one of the extrinsic, lumenal subunits of photosystem II (PSII). PSII is a light-driven water plastoquinone oxidoreductase, using light energy to abstract electrons from H(2)O, generating a proton gradient subsequently used for ATP formation. The extrinsic proteins stabilize the structure of photosystem II oxygen-evolving complex (OEC), the ion environment of oxygen evolution and protect the OEC against heat-induced inactivation. Low-potential cytochrome c that plays a role in the OEC of PSII. This is Photosystem II extrinsic protein V from Cyanothece sp. (strain PCC 7425 / ATCC 29141).